The following is a 120-amino-acid chain: Large ribosomal subunit protein bL20c (120 aa).

This sequence belongs to the bacterial ribosomal protein bL20 family.

Its subcellular location is the plastid. Functionally, binds directly to 23S ribosomal RNA and is necessary for the in vitro assembly process of the 50S ribosomal subunit. It is not involved in the protein synthesizing functions of that subunit. This is Large ribosomal subunit protein bL20c (rpl20) from Cuscuta gronovii (Common dodder).